A 134-amino-acid polypeptide reads, in one-letter code: Psoriasis susceptibility 1 candidate gene 2 protein homolog (134 aa).

The signal sequence occupies residues 1 to 21 (MLTWKLLGLLVLCLCAGGISG). The segment at 18 to 134 (GISGNGDPSP…DLDPPQEEYR (117 aa)) is disordered. Composition is skewed to pro residues over residues 39-67 (PPLPLGPPIPGDPWPGAPPLFDEPPPPGS) and 81-98 (PPKPPSTDPPKPPLPDDP). Residues 122–134 (EEPDLDPPQEEYR) are compositionally biased toward acidic residues.

It localises to the secreted. In Mus musculus (Mouse), this protein is Psoriasis susceptibility 1 candidate gene 2 protein homolog (Psors1c2).